A 196-amino-acid polypeptide reads, in one-letter code: Large ribosomal subunit protein bL9 (196 aa).

The protein belongs to the bacterial ribosomal protein bL9 family.

Its function is as follows. Binds to the 23S rRNA. This Bradyrhizobium sp. (strain ORS 278) protein is Large ribosomal subunit protein bL9.